We begin with the raw amino-acid sequence, 91 residues long: MTKLERQVTICNKLGLHARAATKLAILASEFDAEITIVQGEKKASAASVLGLLMLETGMGKTITLLGKGQDADAALDAICALVDAKFDEAS.

The region spanning 3-90 (KLERQVTICN…ALVDAKFDEA (88 aa)) is the HPr domain. Residue H17 is the Pros-phosphohistidine intermediate of the active site.

Belongs to the HPr family.

It localises to the cytoplasm. Component of the phosphoenolpyruvate-dependent nitrogen-metabolic phosphotransferase system (nitrogen-metabolic PTS), that seems to be involved in regulating nitrogen metabolism. The phosphoryl group from phosphoenolpyruvate (PEP) is transferred to the phosphoryl carrier protein NPr by enzyme I-Ntr. Phospho-NPr then transfers it to EIIA-Ntr. Could function in the transcriptional regulation of sigma-54 dependent operons in conjunction with the NPr (PtsO) and EIIA-Ntr (PtsN) proteins. The protein is Phosphocarrier protein NPr (ptsO) of Shewanella violacea (strain JCM 10179 / CIP 106290 / LMG 19151 / DSS12).